The sequence spans 72 residues: Translation initiation factor IF-1 (72 aa).

In terms of domain architecture, S1-like spans 1-72; it reads MPKEEVLEFP…TKGRITYRFK (72 aa).

Belongs to the IF-1 family. As to quaternary structure, component of the 30S ribosomal translation pre-initiation complex which assembles on the 30S ribosome in the order IF-2 and IF-3, IF-1 and N-formylmethionyl-tRNA(fMet); mRNA recruitment can occur at any time during PIC assembly.

The protein localises to the cytoplasm. In terms of biological role, one of the essential components for the initiation of protein synthesis. Stabilizes the binding of IF-2 and IF-3 on the 30S subunit to which N-formylmethionyl-tRNA(fMet) subsequently binds. Helps modulate mRNA selection, yielding the 30S pre-initiation complex (PIC). Upon addition of the 50S ribosomal subunit IF-1, IF-2 and IF-3 are released leaving the mature 70S translation initiation complex. The sequence is that of Translation initiation factor IF-1 from Rhizobium etli (strain ATCC 51251 / DSM 11541 / JCM 21823 / NBRC 15573 / CFN 42).